The sequence spans 606 residues: MEERGRRKPLYEMTRELAATARGDLPATLVIRDGTLVSVTSGEVLPGMSVAVRGPRIAYVGPDAGHTVGPQTTVIDAAGRYIAPGFLDGHCHIESSQITVTQFARAVLPLGTTGGFFDAHEITNVLGLRGLRLMLDEARSTPLAAYLEVASCVPSTSTELETPGAVIGPEEVAEALSWGEDVIALGEVMNFPGVVFGDERMHAEISAALRAGKIADGHFCWPPDDHRLAAYAASGISGCHEGTTPEDTLWRLRQGMYAKLRRGSAWHDVAATIKAHTERGLDPRRILLVTDDRSPESLLEEGHMDFVVRHAIAQGVNPVTAFQMATLNPAERFRVSHDVGSVTPGRYADILLLEGDLAEVRVSLTVAAGEVVAEGGRMVAELEPYDYPAFCLDTVRVAGGLGPEDFDIPAPGGGERARVRAIRVVENHVETRGEWVELPVEGGLVRLDPRKDVCKLFVIERHGRGGGRGAGFVTGLGFERPAALASTVAHDSHNLMVLGNSEELMSRAAREVVAARGGVAVAVGGETAVLPLPVAGLMSPEPYEEVARLSREIGRALRSAGCRMNYAFMTISLLALVVLPELHLSDRGLVEVGEEGFRLVGLAAEG.

This sequence belongs to the metallo-dependent hydrolases superfamily. Adenine deaminase family. Requires Mn(2+) as cofactor.

The enzyme catalyses adenine + H2O + H(+) = hypoxanthine + NH4(+). The polypeptide is Adenine deaminase (Rubrobacter xylanophilus (strain DSM 9941 / JCM 11954 / NBRC 16129 / PRD-1)).